The following is a 1042-amino-acid chain: SWI/SNF-related matrix-associated actin-dependent regulator of chromatin subfamily A member 1 (1042 aa).

Residues 25-82 (EDEQPGPSTSQEEGAAAAATEATAATEKGEKKKEKNVSSFQLKLAAKAPKSEKEMDPE) are disordered. The segment covering 36-50 (EEGAAAAATEATAAT) has biased composition (low complexity). 2 stretches are compositionally biased toward basic and acidic residues: residues 51 to 60 (EKGEKKKEKN) and 73 to 82 (PKSEKEMDPE). Residues S116 and S119 each carry the phosphoserine modification. A Helicase ATP-binding domain is found at 195–360 (ISLYENGVNG…WALLNFLLPD (166 aa)). 208-215 (DEMGLGKT) is a binding site for ATP. Positions 311–314 (DEAH) match the DEAH box motif. Positions 490 to 641 (VLDKLLAKLK…SIVIQQGRLI (152 aa)) constitute a Helicase C-terminal domain. Residues K650, K716, and K738 each participate in a glycyl lysine isopeptide (Lys-Gly) (interchain with G-Cter in SUMO2) cross-link. Positions 819-849 (EQKKIDGAEPLTPEETEEKEKLLTQGFTNWT) are disordered. Positions 828 to 837 (PLTPEETEEK) are enriched in basic and acidic residues. An SANT 1 domain is found at 843–895 (QGFTNWTKRDFNQFIKANEKYGRDDIDNIAREVEGKSPEEVMEYSAVFWERCN). A Phosphotyrosine modification is found at Y942. The SANT 2 domain occupies 946 to 1010 (KGKNYTEEED…QRRCNTLISL (65 aa)).

The protein belongs to the SNF2/RAD54 helicase family. ISWI subfamily. In terms of assembly, may form homodimers. Component of the ACF-1 ISWI chromatin remodeling complex at least composed of SMARCA1 and BAZ1A, which regulates the spacing of histone octamers on the DNA template to facilitate access to DNA. Within the complex interacts with BAZ1A; the interaction is direct. Component of the WICH-1 ISWI chromatin remodeling complex at least composed of SMARCA1 and BAZ1B/WSTF. Within the complex interacts with BAZ1B/WSTF. Component of the NoRC-1 ISWI chromatin remodeling complex at least composed of SMARCA1 and BAZ2A/TIP5. Within the complex interacts with BAZ2A/TIP5. Component of the BRF-1 ISWI chromatin remodeling complex at least composed of SMARCA1 and BAZ2B. Within the complex interacts with BAZ2B. Component of the NURF-1 ISWI chromatin remodeling complex (also called the nucleosome-remodeling factor (NURF) complex) at least composed of SMARCA1, BPTF, RBBP4 and RBBP7. Within the complex interacts with BPTF. Within the complex interacts with RBBP4 and RBBP7. Component of the CERF-1 ISWI chromatin remodeling complex (also called the CECR2-containing-remodeling factor (CERF) complex) at least composed of CECR2 and SMARCA1. LUZP1 is detected as part of the CERF-1 complex in embryonic stem cells where it is involved in complex stabilization but is not detected in the complex in the testis. Component of the RSF-1 ISWI chromatin remodeling complex at least composed of SMARCA1 and RSF1. Within the complex interacts with RSF1. Interacts with PRLR. Interacts with ERCC6. As to quaternary structure, may form homodimers. Component of the BPFT-SMARCA1 complex at least composed of SMARCA1, BPFT, RBBP4 and RBBP7; the complex is catalytically inactive and does not remodel chromatin. Within the complex interacts with BPTF, RBBP4 and RBBP7. Component of the BAZ1A-1-SMARCA1 complex at least composed of SMARCA1 and BAZ1A; the complex is catalytically inactive and does not remodel chromatin. Component of the BAZ1B-1-SMARCA1 complex at least composed of SMARCA1 and BAZ1B; the complex is catalytically inactive and does not remodel chromatin. Expressed in lung, breast, kidney, ovary, skeletal muscle and brain. As to expression, mainly expressed in non-neuronal tissues such as lung, breast, kidney, and ovary.

It localises to the nucleus. It is found in the chromosome. The catalysed reaction is ATP + H2O = ADP + phosphate + H(+). ATPase that possesses intrinsic ATP-dependent chromatin-remodeling activity. ATPase activity is substrate-dependent, and is increased when nucleosomes are the substrate, but is also catalytically active when DNA alone is the substrate. Catalytic subunit of ISWI chromatin-remodeling complexes, which form ordered nucleosome arrays on chromatin and facilitate access to DNA during DNA-templated processes such as DNA replication, transcription, and repair. Within the ISWI chromatin-remodeling complexes, slides edge- and center-positioned histone octamers away from their original location on the DNA template. Catalytic activity and histone octamer sliding propensity is regulated and determined by components of the ISWI chromatin-remodeling complexes. The BAZ1A-, BAZ1B-, BAZ2A- and BAZ2B-containing ISWI chromatin-remodeling complexes regulate the spacing of nucleosomes along the chromatin and have the ability to slide mononucleosomes to the center of a DNA template. The CECR2- and RSF1-containing ISWI chromatin-remodeling complexes do not have the ability to slide mononucleosomes to the center of a DNA template. Within the NURF-1 and CERF-1 ISWI chromatin remodeling complexes, nucleosomes are the preferred substrate for its ATPase activity. Within the NURF-1 ISWI chromatin-remodeling complex, binds to the promoters of En1 and En2 to positively regulate their expression and promote brain development. May promote neurite outgrowth. May be involved in the development of luteal cells. Facilitates nucleosome assembly during DNA replication, ensuring replication fork progression and genomic stability by preventing replication stress and nascent DNA gaps. In terms of biological role, catalytically inactive when either DNA or nucleosomes are the substrate and does not possess chromatin-remodeling activity. Acts as a negative regulator of chromatin remodelers by generating inactive complexes. This Homo sapiens (Human) protein is SWI/SNF-related matrix-associated actin-dependent regulator of chromatin subfamily A member 1.